Here is a 101-residue protein sequence, read N- to C-terminus: DNA-binding protein Fis (101 aa).

Positions 77–96 (QTRAANMLGINRGTLRKKLK) form a DNA-binding region, H-T-H motif.

It belongs to the transcriptional regulatory Fis family. Homodimer.

Its function is as follows. Activates ribosomal RNA transcription. Plays a direct role in upstream activation of rRNA promoters. This is DNA-binding protein Fis from Shewanella baltica (strain OS223).